Here is a 646-residue protein sequence, read N- to C-terminus: Threonine--tRNA ligase (646 aa).

Residues 1–61 enclose the TGS domain; that stretch reads MIKITFPDGS…NEDANFVLYK (61 aa). The segment at 242–541 is catalytic; it reads DHRKIGKEMD…LIEHTAGKFP (300 aa). Residues cysteine 337, histidine 388, and histidine 518 each contribute to the Zn(2+) site.

It belongs to the class-II aminoacyl-tRNA synthetase family. As to quaternary structure, homodimer. Zn(2+) is required as a cofactor.

The protein resides in the cytoplasm. The enzyme catalyses tRNA(Thr) + L-threonine + ATP = L-threonyl-tRNA(Thr) + AMP + diphosphate + H(+). Its function is as follows. Catalyzes the attachment of threonine to tRNA(Thr) in a two-step reaction: L-threonine is first activated by ATP to form Thr-AMP and then transferred to the acceptor end of tRNA(Thr). Also edits incorrectly charged L-seryl-tRNA(Thr). The protein is Threonine--tRNA ligase of Phocaeicola vulgatus (strain ATCC 8482 / DSM 1447 / JCM 5826 / CCUG 4940 / NBRC 14291 / NCTC 11154) (Bacteroides vulgatus).